A 912-amino-acid polypeptide reads, in one-letter code: MASRQISLALGFLAFLWAVLGAQNKTEEVQCRLMAKFNLSGYVDAKNHSLVIAGLFPIHSRIIPVDEAILEPVSPMCEGFNFRGFRWMKTMIHTIKEINERKDILPNHTLGYQIFDSCYTISKAMESSLVFLTGQEEFKPNFRNSTGSTLAALVGSGGSSLSVAASRILGLYYMPQVGYTSSCSILSDKFQFPSYLRVLPSDNLQSEAIVNLIKHFGWVWVGAIAADDDYGKYGVKTFKEKMESANLCVAFSETIPKVYSNEKMQKAVKAVKTSTAKVIVLYTSDIDLSLFVLEMIHHNITDRTWIATEAWITSALIAKPEYFPYFGGTIGFATPRSVIPGLKEFLYDVHPNKDPNDVLTIEFWQTAFNCTWPNSSVPYNVDHRVNMTGKEDRLYDMSDQLCTGEEKLEDLKNTYLDTSQLRITKQCKQAVYAIAHGLDHLSRCQEGQGPFGSNQQCAYIPTFDFWQLMYYMKEIKFKSHEDKWVILDDNGDLKNGHYDVLNWHLDDEGEISFVTVGRFNFRSTNFELVIPTNSTIFWNTESSRRPDSFCTQVCPPGTRKGIRQGQPICCFDCIPCADGYVSEKSGQRECDPCGEDDWSNAGKSKCVPKLVEFLAYGEALGFTLVILSIFGALVVLAVTVVYVIHRHTPLVKANDRELSFLIQMSLVITVLSSLLFIGKPCNWSCMARQITLALGFCLCLSSILGKTISLFFAYRISVSKTRLISMHPIFRKLIVLVCVVGEIGVCAAYLVLEPPRMFKNIEIQNVKIIFECNEGSVEFLCSIFGFDVLRALLCFLTTFVARQLPDNYYEGKCITFGMLVFFIVWISFVPAYLSTKGKFKVAVEIFAILASSYGLLGCLFLPKCFIILLRPKRNTDETVGGRVPTVDRSIQLTSASVSSELNSTTVSTVLDE.

The first 21 residues, 1–21, serve as a signal peptide directing secretion; that stretch reads MASRQISLALGFLAFLWAVLG. Topologically, residues 22–623 are extracellular; the sequence is AQNKTEEVQC…LAYGEALGFT (602 aa). N-linked (GlcNAc...) asparagine glycosylation is found at Asn24, Asn38, Asn299, and Asn386. A helical transmembrane segment spans residues 624–644; that stretch reads LVILSIFGALVVLAVTVVYVI. Residues 645–657 are Cytoplasmic-facing; the sequence is HRHTPLVKANDRE. The helical transmembrane segment at 658-678 threads the bilayer; it reads LSFLIQMSLVITVLSSLLFIG. Topologically, residues 679–691 are extracellular; it reads KPCNWSCMARQIT. A helical transmembrane segment spans residues 692–712; it reads LALGFCLCLSSILGKTISLFF. The Cytoplasmic portion of the chain corresponds to 713–732; the sequence is AYRISVSKTRLISMHPIFRK. A helical transmembrane segment spans residues 733–753; the sequence is LIVLVCVVGEIGVCAAYLVLE. At 754 to 778 the chain is on the extracellular side; that stretch reads PPRMFKNIEIQNVKIIFECNEGSVE. The chain crosses the membrane as a helical span at residues 779 to 799; the sequence is FLCSIFGFDVLRALLCFLTTF. Residues 800–812 are Cytoplasmic-facing; that stretch reads VARQLPDNYYEGK. Residues 813 to 833 traverse the membrane as a helical segment; it reads CITFGMLVFFIVWISFVPAYL. The Extracellular portion of the chain corresponds to 834-840; that stretch reads STKGKFK. The helical transmembrane segment at 841 to 861 threads the bilayer; it reads VAVEIFAILASSYGLLGCLFL. Residues 862 to 912 are Cytoplasmic-facing; the sequence is PKCFIILLRPKRNTDETVGGRVPTVDRSIQLTSASVSSELNSTTVSTVLDE.

The protein belongs to the G-protein coupled receptor 3 family. As to expression, expressed at the sensory surface of the vomeronasal organ.

The protein localises to the cell membrane. In terms of biological role, putative pheromone receptor. This Mus musculus (Mouse) protein is Vomeronasal type-2 receptor 1 (Vmn2r1).